We begin with the raw amino-acid sequence, 1093 residues long: Atos homolog protein A (1093 aa).

The tract at residues 29-37 (ALLITEGRT) is transactivation domain 1 (TAD1). Disordered stretches follow at residues 396-479 (AGRP…GNPL), 558-579 (SSKSKLKTPDTPISPRLDGESK), and 746-788 (HDNF…GSMR). The segment covering 746 to 763 (HDNFKNKNRQDKTKAAHD) has biased composition (basic and acidic residues). The segment at 895 to 952 (LLGNFEESVLNFRLDPLGIVEGFTAEVGASGVFCPTHMTLPVEVSFYSVSDDNAPSPY) is required for macropage invasion. Residues 979-987 (FNPNKTVVK) form a transactivation domain 2 (TAD2) region.

This sequence belongs to the ATOS family.

The protein localises to the nucleus. Its function is as follows. Transcription regulator that syncronizes transcriptional and translational programs to promote macrophage invasion of tissues. In Gallus gallus (Chicken), this protein is Atos homolog protein A (ATOSA).